The following is a 670-amino-acid chain: E3 ubiquitin-protein ligase MAG2 (670 aa).

2 disordered regions span residues 1 to 84 (MVEP…TSTR) and 124 to 145 (EVER…RDEH). Over residues 20–39 (DTLNATSNSSKQGVSNNKRN) the composition is skewed to polar residues. Residues 51-66 (SDGRDNAHNYHGEGRR) show a composition bias toward basic and acidic residues. The segment at 195-250 (CSICLSEEPVAPRMVTCGHIFCLSCLLNFFSIEETVKNKETGYSKKKKYKECPLCG) adopts an RING-type zinc-finger fold. Residues 609-670 (TEDEKASKEN…LFSSNHQALG (62 aa)) form a disordered region. Over residues 610–622 (EDEKASKENKEFQ) the composition is skewed to basic and acidic residues. A compositionally biased stretch (low complexity) spans 637-649 (VTDSTDSPPTSNG).

Belongs to the RNF10 family.

It is found in the cytoplasm. The catalysed reaction is S-ubiquitinyl-[E2 ubiquitin-conjugating enzyme]-L-cysteine + [acceptor protein]-L-lysine = [E2 ubiquitin-conjugating enzyme]-L-cysteine + N(6)-ubiquitinyl-[acceptor protein]-L-lysine.. It participates in protein modification; protein ubiquitination. Functionally, E3 ubiquitin-protein ligase involved in the degradation of non-functional 18S rRNAs in response to stalled ribosomes. Catalyzes monoubiquitination of RPS3/uS3 in response to stalled ribosomes, initiating a HEL2-dependent response that activates the degradation of non-functional 18S rRNAs. This is E3 ubiquitin-protein ligase MAG2 from Saccharomyces cerevisiae (strain ATCC 204508 / S288c) (Baker's yeast).